The sequence spans 284 residues: 2-dehydro-3-deoxyphosphooctonate aldolase (284 aa).

It belongs to the KdsA family.

The protein localises to the cytoplasm. It catalyses the reaction D-arabinose 5-phosphate + phosphoenolpyruvate + H2O = 3-deoxy-alpha-D-manno-2-octulosonate-8-phosphate + phosphate. It participates in carbohydrate biosynthesis; 3-deoxy-D-manno-octulosonate biosynthesis; 3-deoxy-D-manno-octulosonate from D-ribulose 5-phosphate: step 2/3. It functions in the pathway bacterial outer membrane biogenesis; lipopolysaccharide biosynthesis. This is 2-dehydro-3-deoxyphosphooctonate aldolase from Serratia proteamaculans (strain 568).